The following is a 293-amino-acid chain: uncharacterized protein (293 aa).

Positions 1 to 22 (MTFNEGVQIDTSTTSTSGSGGG) are disordered. The chain crosses the membrane as a helical span at residues 25–45 (LAIGGGLGGLLVVVVAMLLGV). The disordered stretch occupies residues 243 to 265 (GDDRIQQQTTGRTNPETWTHGSA). Residues 248 to 265 (QQQTTGRTNPETWTHGSA) show a composition bias toward polar residues.

The protein localises to the membrane. This is an uncharacterized protein from Mycobacterium tuberculosis (strain CDC 1551 / Oshkosh).